The sequence spans 2191 residues: Genome polyprotein (2191 aa).

Residue Gly2 is the site of N-myristoyl glycine; by host attachment. The Cytoplasmic segment spans residues 2-1501 (GAQVSTQKTG…HVSRAFICLQ (1500 aa)). The interval 566 to 582 (FYQNDVQNAVERSIVRV) is amphipathic alpha-helix. Active-site for protease 2A activity residues include His878 and Asp896. 2 residues coordinate Zn(2+): Cys913 and Cys915. The active-site For protease 2A activity is the Cys967. Zn(2+)-binding residues include Cys973 and His975. A membrane-binding region spans residues 1107–1179 (NNGWLKKFTE…EQSAPSQSDQ (73 aa)). The tract at residues 1107–1245 (NNGWLKKFTE…SPGVGKSVAT (139 aa)) is oligomerization. The RNA-binding stretch occupies residues 1128–1132 (AIKIQ). The SF3 helicase domain maps to 1211–1367 (EKKMSNYIQF…SMYNQNGKIN (157 aa)). Zn(2+) is bound by residues Cys1375, Cys1387, and Cys1392. The segment at 1375–1392 (CDEECCPVNFKKCCPLVC) adopts a C4-type; degenerate zinc-finger fold. The interval 1419–1426 (EYNHRHSV) is RNA-binding. The segment at 1430–1435 (LEALFQ) is oligomerization. Residues 1502 to 1517 (ALTTFVSVAGIIYIIY) lie within the membrane without spanning it. At 1518–2191 (KLFAGFQGAY…TLRRKWLDSF (674 aa)) the chain is on the cytoplasmic side. At Tyr1527 the chain carries O-(5'-phospho-RNA)-tyrosine. The Peptidase C3 domain maps to 1547–1725 (GPAFEFAVAM…FSAALLKHYF (179 aa)). Active-site for protease 3C activity residues include His1586, Glu1617, and Cys1693. The RdRp catalytic domain maps to 1956–2072 (GHLIAFDYSG…SYPWPIDASL (117 aa)). Residues Asp1962 and Asp2058 each coordinate Mg(2+).

It belongs to the picornaviruses polyprotein family. Interacts with capsid protein VP1 and capsid protein VP3 to form heterotrimeric protomers. In terms of assembly, interacts with capsid protein VP0, and capsid protein VP3 to form heterotrimeric protomers. Five protomers subsequently associate to form pentamers which serve as building blocks for the capsid. Interacts with capsid protein VP2, capsid protein VP3 and capsid protein VP4 following cleavage of capsid protein VP0. Interacts with host CD55 and FCGRT; these interactions promote virus attachment to the host cell and subsequent internalization. As to quaternary structure, interacts with capsid protein VP1 and capsid protein VP3 in the mature capsid. Interacts with host CD55 and FCGRT; these interactions promote virus attachment to the host cell and subsequent internalization. Interacts with capsid protein VP0 and capsid protein VP1 to form heterotrimeric protomers. Five protomers subsequently associate to form pentamers which serve as building blocks for the capsid. Interacts with capsid protein VP4 in the mature capsid. Interacts with protein 2C; this interaction may be important for virion morphogenesis. Interacts with host FCGRT; this interaction promotes virus attachment to the host cell and subsequent internalization. In terms of assembly, interacts with capsid protein VP1 and capsid protein VP3. As to quaternary structure, homodimer. Homohexamer; forms a hexameric ring structure with 6-fold symmetry characteristic of AAA+ ATPases. Interacts (via N-terminus) with host RTN3 (via reticulon domain); this interaction is important for viral replication. Interacts with capsid protein VP3; this interaction may be important for virion morphogenesis. In terms of assembly, interacts with protein 3CD. As to quaternary structure, homodimer. Interacts with host GBF1. Interacts (via GOLD domain) with host ACBD3 (via GOLD domain); this interaction allows the formation of a viral protein 3A/ACBD3 heterotetramer with a 2:2 stoichiometry, which will stimulate the recruitment of host PI4KB in order to synthesize PI4P at the viral RNA replication sites. Interacts with RNA-directed RNA polymerase. In terms of assembly, interacts with protein 3AB and with RNA-directed RNA polymerase. As to quaternary structure, interacts with Viral protein genome-linked and with protein 3CD. Requires Mg(2+) as cofactor. Post-translationally, specific enzymatic cleavages in vivo by the viral proteases yield processing intermediates and the mature proteins. Myristoylation is required for the formation of pentamers during virus assembly. Further assembly of 12 pentamers and a molecule of genomic RNA generates the provirion. In terms of processing, during virion maturation, immature virions are rendered infectious following cleavage of VP0 into VP4 and VP2. This maturation seems to be an autocatalytic event triggered by the presence of RNA in the capsid and it is followed by a conformational change infectious virion. Post-translationally, myristoylation is required during RNA encapsidation and formation of the mature virus particle. VPg is uridylylated by the polymerase into VPg-pUpU. This acts as a nucleotide-peptide primer for the genomic RNA replication.

The protein localises to the virion. It is found in the host cytoplasm. It localises to the host cytoplasmic vesicle membrane. Its subcellular location is the host nucleus. The catalysed reaction is a ribonucleoside 5'-triphosphate + H2O = a ribonucleoside 5'-diphosphate + phosphate + H(+). It catalyses the reaction Selective cleavage of Tyr-|-Gly bond in the picornavirus polyprotein.. It carries out the reaction RNA(n) + a ribonucleoside 5'-triphosphate = RNA(n+1) + diphosphate. The enzyme catalyses Selective cleavage of Gln-|-Gly bond in the poliovirus polyprotein. In other picornavirus reactions Glu may be substituted for Gln, and Ser or Thr for Gly.. With respect to regulation, replication or transcription is subject to high level of random mutations by the nucleotide analog ribavirin. Its function is as follows. Forms an icosahedral capsid of pseudo T=3 symmetry with capsid proteins VP2 and VP3. The capsid is 300 Angstroms in diameter, composed of 60 copies of each capsid protein and enclosing the viral positive strand RNA genome. Capsid protein VP1 mainly forms the vertices of the capsid. Capsid protein VP1 interacts with host cell receptor to provide virion attachment to target host cells. This attachment induces virion internalization. Tyrosine kinases are probably involved in the entry process. After binding to its receptor, the capsid undergoes conformational changes. Capsid protein VP1 N-terminus (that contains an amphipathic alpha-helix) and capsid protein VP4 are externalized. Together, they shape a pore in the host membrane through which viral genome is translocated to host cell cytoplasm. Functionally, forms an icosahedral capsid of pseudo T=3 symmetry with capsid proteins VP2 and VP3. The capsid is 300 Angstroms in diameter, composed of 60 copies of each capsid protein and enclosing the viral positive strand RNA genome. Lies on the inner surface of the capsid shell. After binding to the host receptor, the capsid undergoes conformational changes. Capsid protein VP4 is released, Capsid protein VP1 N-terminus is externalized, and together, they shape a pore in the host membrane through which the viral genome is translocated into the host cell cytoplasm. In terms of biological role, component of immature procapsids, which is cleaved into capsid proteins VP4 and VP2 after maturation. Allows the capsid to remain inactive before the maturation step. Its function is as follows. Cysteine protease that cleaves viral polyprotein and specific host proteins. It is responsible for the autocatalytic cleavage between the P1 and P2 regions, which is the first cleavage occurring in the polyprotein. Also cleaves the host translation initiation factor EIF4G1, in order to shut down the capped cellular mRNA translation. Inhibits the host nucleus-cytoplasm protein and RNA trafficking by cleaving host members of the nuclear pores. Counteracts stress granule formation probably by antagonizing its assembly or promoting its dissassembly. Functionally, plays an essential role in the virus replication cycle by acting as a viroporin. Creates a pore in the host endoplasmic reticulum and as a consequence releases Ca2+ in the cytoplasm of infected cell. In turn, high levels of cytoplasmic calcium may trigger membrane trafficking and transport of viral ER-associated proteins to viroplasms, sites of viral genome replication. Induces and associates with structural rearrangements of intracellular membranes. Displays RNA-binding, nucleotide binding and NTPase activities. May play a role in virion morphogenesis and viral RNA encapsidation by interacting with the capsid protein VP3. In terms of biological role, localizes the viral replication complex to the surface of membranous vesicles. Together with protein 3CD binds the Cis-Active RNA Element (CRE) which is involved in RNA synthesis initiation. Acts as a cofactor to stimulate the activity of 3D polymerase, maybe through a nucleid acid chaperone activity. Its function is as follows. Localizes the viral replication complex to the surface of membranous vesicles. It inhibits host cell endoplasmic reticulum-to-Golgi apparatus transport and causes the disassembly of the Golgi complex, possibly through GBF1 interaction. This would result in depletion of MHC, trail receptors and IFN receptors at the host cell surface. Plays an essential role in viral RNA replication by recruiting ACBD3 and PI4KB at the viral replication sites, thereby allowing the formation of the rearranged membranous structures where viral replication takes place. Functionally, acts as a primer for viral RNA replication and remains covalently bound to viral genomic RNA. VPg is uridylylated prior to priming replication into VPg-pUpU. The oriI viral genomic sequence may act as a template for this. The VPg-pUpU is then used as primer on the genomic RNA poly(A) by the RNA-dependent RNA polymerase to replicate the viral genome. During genome replication, the VPg-RNA linkage is removed by the host TDP2, thereby accelerating replication. During the late stage of the replication cycle, host TDP2 is excluded from sites of viral RNA synthesis and encapsidation, allowing for the generation of progeny virions. Involved in the viral replication complex and viral polypeptide maturation. It exhibits protease activity with a specificity and catalytic efficiency that is different from protease 3C. Protein 3CD binds to the 5'UTR of the viral genome. In terms of biological role, replicates the viral genomic RNA on the surface of intracellular membranes. May form linear arrays of subunits that propagate along a strong head-to-tail interaction called interface-I. Covalently attaches UMP to a tyrosine of VPg, which is used to prime RNA synthesis. The positive stranded RNA genome is first replicated at virus induced membranous vesicles, creating a dsRNA genomic replication form. This dsRNA is then used as template to synthesize positive stranded RNA genomes. ss(+)RNA genomes are either translated, replicated or encapsidated. Its function is as follows. Major viral protease that mediates proteolytic processing of the polyprotein. Cleaves host EIF5B, contributing to host translation shutoff. Also cleaves host PABPC1, contributing to host translation shutoff. Cleaves host NLRP1, triggers host N-glycine-mediated degradation of the autoinhibitory NLRP1 N-terminal fragment. This chain is Genome polyprotein, found in Echovirus 6 (strain Charles).